The primary structure comprises 1301 residues: DNA-directed RNA polymerase subunit beta (1301 aa).

The protein belongs to the RNA polymerase beta chain family. The RNAP catalytic core consists of 2 alpha, 1 beta, 1 beta' and 1 omega subunit. When a sigma factor is associated with the core the holoenzyme is formed, which can initiate transcription.

It catalyses the reaction RNA(n) + a ribonucleoside 5'-triphosphate = RNA(n+1) + diphosphate. Functionally, DNA-dependent RNA polymerase catalyzes the transcription of DNA into RNA using the four ribonucleoside triphosphates as substrates. In Chlorobium luteolum (strain DSM 273 / BCRC 81028 / 2530) (Pelodictyon luteolum), this protein is DNA-directed RNA polymerase subunit beta.